Consider the following 1036-residue polypeptide: uncharacterized protein (1036 aa).

This is an uncharacterized protein from Schizosaccharomyces pombe (strain 972 / ATCC 24843) (Fission yeast).